The following is an 84-amino-acid chain: Small ribosomal subunit protein bS20 (84 aa).

This sequence belongs to the bacterial ribosomal protein bS20 family.

Binds directly to 16S ribosomal RNA. This is Small ribosomal subunit protein bS20 from Latilactobacillus sakei subsp. sakei (strain 23K) (Lactobacillus sakei subsp. sakei).